We begin with the raw amino-acid sequence, 130 residues long: Small ribosomal subunit protein uS8 (130 aa).

The protein belongs to the universal ribosomal protein uS8 family. Part of the 30S ribosomal subunit. Contacts proteins S5 and S12.

Its function is as follows. One of the primary rRNA binding proteins, it binds directly to 16S rRNA central domain where it helps coordinate assembly of the platform of the 30S subunit. The chain is Small ribosomal subunit protein uS8 from Tolumonas auensis (strain DSM 9187 / NBRC 110442 / TA 4).